A 289-amino-acid chain; its full sequence is ATP synthase gamma chain (289 aa).

Belongs to the ATPase gamma chain family. As to quaternary structure, F-type ATPases have 2 components, CF(1) - the catalytic core - and CF(0) - the membrane proton channel. CF(1) has five subunits: alpha(3), beta(3), gamma(1), delta(1), epsilon(1). CF(0) has three main subunits: a, b and c.

It localises to the cell inner membrane. In terms of biological role, produces ATP from ADP in the presence of a proton gradient across the membrane. The gamma chain is believed to be important in regulating ATPase activity and the flow of protons through the CF(0) complex. This chain is ATP synthase gamma chain, found in Azoarcus sp. (strain BH72).